An 88-amino-acid polypeptide reads, in one-letter code: MKSSHIALICIVMFSLFALHESRMEGGAIHRSMLNITIPPCIKTFCKVLTFEKHCWCCFGPRAKKKLCWNEQKYPNAKELCYAGCIIE.

A signal peptide spans 1-22 (MKSSHIALICIVMFSLFALHES). Cystine bridges form between cysteine 41–cysteine 57, cysteine 46–cysteine 85, cysteine 55–cysteine 81, and cysteine 58–cysteine 68.

Belongs to the MEG family. In terms of tissue distribution, expressed in leaves and flowers.

In Arabidopsis thaliana (Mouse-ear cress), this protein is EMBRYO SURROUNDING FACTOR 1-like protein 7 (ESFL7).